The following is a 216-amino-acid chain: 3-isopropylmalate dehydratase small subunit (216 aa).

It belongs to the LeuD family. LeuD type 1 subfamily. Heterodimer of LeuC and LeuD.

The enzyme catalyses (2R,3S)-3-isopropylmalate = (2S)-2-isopropylmalate. The protein operates within amino-acid biosynthesis; L-leucine biosynthesis; L-leucine from 3-methyl-2-oxobutanoate: step 2/4. Catalyzes the isomerization between 2-isopropylmalate and 3-isopropylmalate, via the formation of 2-isopropylmaleate. This Ralstonia nicotianae (strain ATCC BAA-1114 / GMI1000) (Ralstonia solanacearum) protein is 3-isopropylmalate dehydratase small subunit.